A 419-amino-acid polypeptide reads, in one-letter code: MRKIIINGGKALSGEVAVSGAKNSVVALIPAIILADDIVILDGVPAISDVDSLIEIMELMGATVNYHGDTLEIDPRGVQDIPMPYGKINSLRASYYFYGSLLGRFGQAVVGLPGGCDLGPRPIDLHLKAFEAMGVEVSYEGENMNLSTNGQKIHGAHIYMDTVSVGATINTMVAATKAQGKTVIENAAREPEIIDVATLLNNMGAHIRGAGTDIITIQGVQKLHGTRHQVIPDRIEAGTYIALAAAIGKGVKITNVLYEHLESFIAKLEEMGVRMTVEEDAIFVEKQESLKAITIKTSPYPGFATDLQQPLTPLLLKADGRGTIIDTIYEKRINHVPELMRMGADISVIGGQIVYQGPSRLTGAQVKATDLRAGAALVTAGLIAEGKTEITNIEFILRGYASIIAKLTALGADIQLIED.

A phosphoenolpyruvate-binding site is contributed by 22–23; the sequence is KN. Position 92 (R92) interacts with UDP-N-acetyl-alpha-D-glucosamine. The Proton donor role is filled by C116. C116 carries the post-translational modification 2-(S-cysteinyl)pyruvic acid O-phosphothioketal. Residues 121–125, D306, and I328 each bind UDP-N-acetyl-alpha-D-glucosamine; that span reads RPIDL.

The protein belongs to the EPSP synthase family. MurA subfamily.

It localises to the cytoplasm. The enzyme catalyses phosphoenolpyruvate + UDP-N-acetyl-alpha-D-glucosamine = UDP-N-acetyl-3-O-(1-carboxyvinyl)-alpha-D-glucosamine + phosphate. It functions in the pathway cell wall biogenesis; peptidoglycan biosynthesis. In terms of biological role, cell wall formation. Adds enolpyruvyl to UDP-N-acetylglucosamine. This is UDP-N-acetylglucosamine 1-carboxyvinyltransferase 2 from Streptococcus pyogenes serotype M1.